Reading from the N-terminus, the 152-residue chain is Small integral membrane protein 28 (152 aa).

A helical membrane pass occupies residues 52–72 (FLCILLPATILLFLAFLLLFL). A disordered region spans residues 117–152 (PLPPEATLPSQCLPPSYEEATRNPPGEEAQGCSPSV).

It localises to the membrane. The polypeptide is Small integral membrane protein 28 (Homo sapiens (Human)).